A 156-amino-acid polypeptide reads, in one-letter code: Small ribosomal subunit protein uS7 (156 aa).

It belongs to the universal ribosomal protein uS7 family. Part of the 30S ribosomal subunit. Contacts proteins S9 and S11.

Its function is as follows. One of the primary rRNA binding proteins, it binds directly to 16S rRNA where it nucleates assembly of the head domain of the 30S subunit. Is located at the subunit interface close to the decoding center, probably blocks exit of the E-site tRNA. The sequence is that of Small ribosomal subunit protein uS7 from Heliobacterium modesticaldum (strain ATCC 51547 / Ice1).